The sequence spans 372 residues: L-selectin (372 aa).

An N-terminal signal peptide occupies residues 1–28 (MIFPWKCQSTQRDLWNIFKLWGWTMLCC). The propeptide occupies 29 to 38 (DFLAHHGTDC). The Extracellular portion of the chain corresponds to 39–332 (WTYHYSEKPM…FSMIKEGDYN (294 aa)). One can recognise a C-type lectin domain in the interval 55-155 (RFCRDNYTDL…ACHKLKAALC (101 aa)). 9 disulfides stabilise this stretch: Cys57-Cys155, Cys128-Cys147, Cys160-Cys171, Cys165-Cys180, Cys182-Cys191, Cys197-Cys241, Cys227-Cys254, Cys259-Cys303, and Cys289-Cys316. Asn60 and Asn104 each carry an N-linked (GlcNAc...) asparagine glycan. Ca(2+) contacts are provided by Glu118, Asn120, Glu126, Asn143, and Asp144. Residues 156–192 (YTASCQPWSCSGHGECVEIINNYTCNCDVGYYGPQCQ) enclose the EGF-like domain. Residue Asn177 is glycosylated (N-linked (GlcNAc...) asparagine). 2 consecutive Sushi domains span residues 195–256 (IQCE…TCQV) and 257–318 (IQCE…ICQK). N-linked (GlcNAc...) asparagine glycans are attached at residues Asn232, Asn246, and Asn271. The helical transmembrane segment at 333–355 (PLFIPVAVMVTAFSGLAFIIWLA) threads the bilayer. Topologically, residues 356–372 (RRLKKGKKSKRSMNDPY) are cytoplasmic.

The protein belongs to the selectin/LECAM family. Interaction with SELPLG/PSGL1 and PODXL2 is required for promoting recruitment and rolling of leukocytes. This interaction is dependent on the sialyl Lewis X glycan modification of SELPLG and PODXL2, and tyrosine sulfation modifications of SELPLG. Sulfation on 'Tyr-51' of SELPLG is important for L-selectin binding. N-glycosylated. Expressed in B-cell lines and T-lymphocytes.

The protein resides in the cell membrane. In terms of biological role, calcium-dependent lectin that mediates cell adhesion by binding to glycoproteins on neighboring cells. Mediates the adherence of lymphocytes to endothelial cells of high endothelial venules in peripheral lymph nodes. Promotes initial tethering and rolling of leukocytes in endothelia. In Homo sapiens (Human), this protein is L-selectin (SELL).